Here is a 109-residue protein sequence, read N- to C-terminus: MAAAAGSRVFGLLGRSRLQLSRCMSSGAHGEEGSARMWKALTYFVALPGVGVSMLNVFLKSHHGEEERPEFVAYPHLRIRSKPFPWGDGNHTLFHNPHVNPLPTGYEDE.

The transit peptide at 1 to 24 directs the protein to the mitochondrion; sequence MAAAAGSRVFGLLGRSRLQLSRCM. Over 25 to 34 the chain is Mitochondrial matrix; the sequence is SSGAHGEEGS. Residues 35–59 traverse the membrane as a helical segment; sequence ARMWKALTYFVALPGVGVSMLNVFL. Topologically, residues 60 to 109 are mitochondrial intermembrane; the sequence is KSHHGEEERPEFVAYPHLRIRSKPFPWGDGNHTLFHNPHVNPLPTGYEDE.

It belongs to the cytochrome c oxidase subunit 6A family. As to quaternary structure, component of the cytochrome c oxidase (complex IV, CIV), a multisubunit enzyme composed of 14 subunits. The complex is composed of a catalytic core of 3 subunits MT-CO1, MT-CO2 and MT-CO3, encoded in the mitochondrial DNA, and 11 supernumerary subunits COX4I1 (or COX4I2), COX5A, COX5B, COX6A2 (or COX6A1), COX6B1 (or COX6B2), COX6C, COX7A1 (or COX7A2), COX7B, COX7C, COX8B and NDUFA4, which are encoded in the nuclear genome. The complex exists as a monomer or a dimer and forms supercomplexes (SCs) in the inner mitochondrial membrane with NADH-ubiquinone oxidoreductase (complex I, CI) and ubiquinol-cytochrome c oxidoreductase (cytochrome b-c1 complex, complex III, CIII), resulting in different assemblies (supercomplex SCI(1)III(2)IV(1) and megacomplex MCI(2)III(2)IV(2)).

Its subcellular location is the mitochondrion inner membrane. The protein operates within energy metabolism; oxidative phosphorylation. Its function is as follows. Component of the cytochrome c oxidase, the last enzyme in the mitochondrial electron transport chain which drives oxidative phosphorylation. The respiratory chain contains 3 multisubunit complexes succinate dehydrogenase (complex II, CII), ubiquinol-cytochrome c oxidoreductase (cytochrome b-c1 complex, complex III, CIII) and cytochrome c oxidase (complex IV, CIV), that cooperate to transfer electrons derived from NADH and succinate to molecular oxygen, creating an electrochemical gradient over the inner membrane that drives transmembrane transport and the ATP synthase. Cytochrome c oxidase is the component of the respiratory chain that catalyzes the reduction of oxygen to water. Electrons originating from reduced cytochrome c in the intermembrane space (IMS) are transferred via the dinuclear copper A center (CU(A)) of subunit 2 and heme A of subunit 1 to the active site in subunit 1, a binuclear center (BNC) formed by heme A3 and copper B (CU(B)). The BNC reduces molecular oxygen to 2 water molecules unsing 4 electrons from cytochrome c in the IMS and 4 protons from the mitochondrial matrix. The chain is Cytochrome c oxidase subunit 6A1, mitochondrial (COX6A1) from Bos taurus (Bovine).